The primary structure comprises 193 residues: Adenine phosphoribosyltransferase (193 aa).

It belongs to the purine/pyrimidine phosphoribosyltransferase family. In terms of assembly, homodimer.

It is found in the cytoplasm. The enzyme catalyses AMP + diphosphate = 5-phospho-alpha-D-ribose 1-diphosphate + adenine. The protein operates within purine metabolism; AMP biosynthesis via salvage pathway; AMP from adenine: step 1/1. Its function is as follows. Catalyzes a salvage reaction resulting in the formation of AMP, that is energically less costly than de novo synthesis. The sequence is that of Adenine phosphoribosyltransferase from Bifidobacterium longum (strain NCC 2705).